The chain runs to 488 residues: Aspartyl/glutamyl-tRNA(Asn/Gln) amidotransferase subunit B (488 aa).

This sequence belongs to the GatB/GatE family. GatB subfamily. In terms of assembly, heterotrimer of A, B and C subunits.

The catalysed reaction is L-glutamyl-tRNA(Gln) + L-glutamine + ATP + H2O = L-glutaminyl-tRNA(Gln) + L-glutamate + ADP + phosphate + H(+). It catalyses the reaction L-aspartyl-tRNA(Asn) + L-glutamine + ATP + H2O = L-asparaginyl-tRNA(Asn) + L-glutamate + ADP + phosphate + 2 H(+). Its function is as follows. Allows the formation of correctly charged Asn-tRNA(Asn) or Gln-tRNA(Gln) through the transamidation of misacylated Asp-tRNA(Asn) or Glu-tRNA(Gln) in organisms which lack either or both of asparaginyl-tRNA or glutaminyl-tRNA synthetases. The reaction takes place in the presence of glutamine and ATP through an activated phospho-Asp-tRNA(Asn) or phospho-Glu-tRNA(Gln). The chain is Aspartyl/glutamyl-tRNA(Asn/Gln) amidotransferase subunit B from Ralstonia nicotianae (strain ATCC BAA-1114 / GMI1000) (Ralstonia solanacearum).